A 210-amino-acid polypeptide reads, in one-letter code: 3-hexulose-6-phosphate synthase (210 aa).

The protein belongs to the HPS/KGPDC family. HPS subfamily.

The enzyme catalyses D-ribulose 5-phosphate + formaldehyde = D-arabino-hex-3-ulose 6-phosphate. It functions in the pathway one-carbon metabolism; formaldehyde assimilation via RuMP pathway; D-fructose 6-phosphate from D-ribulose 5-phosphate and formaldehyde: step 1/2. Its function is as follows. Catalyzes the condensation of ribulose 5-phosphate with formaldehyde to form 3-hexulose 6-phosphate. The chain is 3-hexulose-6-phosphate synthase from Staphylococcus epidermidis (strain ATCC 12228 / FDA PCI 1200).